We begin with the raw amino-acid sequence, 61 residues long: Small ribosomal subunit protein uS14 (61 aa).

Zn(2+) is bound by residues cysteine 24, cysteine 27, cysteine 40, and cysteine 43.

It belongs to the universal ribosomal protein uS14 family. Zinc-binding uS14 subfamily. In terms of assembly, part of the 30S ribosomal subunit. Contacts proteins S3 and S10. Zn(2+) serves as cofactor.

In terms of biological role, binds 16S rRNA, required for the assembly of 30S particles and may also be responsible for determining the conformation of the 16S rRNA at the A site. The polypeptide is Small ribosomal subunit protein uS14 (Pseudothermotoga lettingae (strain ATCC BAA-301 / DSM 14385 / NBRC 107922 / TMO) (Thermotoga lettingae)).